Consider the following 453-residue polypeptide: Succinate-semialdehyde dehydrogenase (acetylating) (453 aa).

An NADP(+)-binding site is contributed by 188-193; the sequence is ATGGAG. The active site involves Cys-242.

Homodimer.

It catalyses the reaction succinate semialdehyde + NADP(+) + CoA = succinyl-CoA + NADPH + H(+). Its function is as follows. Catalyzes the reduction of succinate semialdehyde to succinyl-CoA. The enzyme is specific for succinate semialdehyde and succinyl-CoA, and only shows low activity with palmitoyl-CoA. There is no activity with NAD(+) as cosubstrate. The chain is Succinate-semialdehyde dehydrogenase (acetylating) (sucD) from Clostridium kluyveri (strain ATCC 8527 / DSM 555 / NBRC 12016 / NCIMB 10680 / K1).